Here is a 194-residue protein sequence, read N- to C-terminus: Small COPII coat GTPase SAR1B (194 aa).

The STAR; SAR1-N-terminal activation recruitment. Required for the activation and subsequent recruitment to ER membrane signature appears at 2–4 (FLV). The segment at 10-14 (MFLWL) is mediates recruitment to ER membranes. GDP is bound by residues asparagine 30, alanine 31, glycine 32, lysine 33, threonine 34, and threonine 35. A GTP-binding site is contributed by asparagine 30. Residues glycine 32, lysine 33, threonine 34, and threonine 35 each contribute to the GTP site. Residue aspartate 70 participates in Mg(2+) binding. The GDP site is built by lysine 131, aspartate 133, and isoleucine 172. Lysine 131, aspartate 133, and isoleucine 172 together coordinate GTP.

Belongs to the small GTPase superfamily. SAR1 family. In terms of assembly, homodimer; upon association with membrane. Part of the coat protein complex II/COPII, composed of SEC23/24 and SEC13/31 heterodimers, that it helps recruit and assemble on endoplasmic reticulum (ER) membranes at ER exit sites.

It is found in the endoplasmic reticulum membrane. Its subcellular location is the golgi apparatus. It localises to the golgi stack membrane. The protein resides in the cytoplasm. The protein localises to the cytosol. The enzyme catalyses GTP + H2O = GDP + phosphate + H(+). Small GTPases activation is mediated by guanine exchange factors (GEF), while inactivation through hydrolysis of the bound GTP is stimulated by GTPase activating proteins (GAP). In terms of biological role, small GTPase that cycles between an active GTP-bound and an inactive GDP-bound state and mainly functions in vesicle-mediated endoplasmic reticulum (ER) to Golgi transport. The active GTP-bound form inserts into the endoplasmic reticulum membrane where it recruits the remainder of the coat protein complex II/COPII. The coat protein complex II assembling and polymerizing on endoplasmic reticulum membrane is responsible for both the sorting of cargos and the deformation and budding of membranes into vesicles destined to the Golgi. This Dictyostelium discoideum (Social amoeba) protein is Small COPII coat GTPase SAR1B (sarB).